Here is a 137-residue protein sequence, read N- to C-terminus: Large ribosomal subunit protein uL16 (137 aa).

This sequence belongs to the universal ribosomal protein uL16 family. In terms of assembly, part of the 50S ribosomal subunit.

In terms of biological role, binds 23S rRNA and is also seen to make contacts with the A and possibly P site tRNAs. In Lawsonia intracellularis (strain PHE/MN1-00), this protein is Large ribosomal subunit protein uL16.